Consider the following 332-residue polypeptide: tRNA-dihydrouridine(20/20a) synthase (332 aa).

FMN contacts are provided by residues 22 to 24 and glutamine 75; that span reads PMM. Cysteine 105 acts as the Proton donor in catalysis. FMN contacts are provided by residues lysine 144, histidine 177, 217-219, and 239-240; these read NGG and GR.

Belongs to the Dus family. DusA subfamily. FMN serves as cofactor.

The enzyme catalyses 5,6-dihydrouridine(20) in tRNA + NADP(+) = uridine(20) in tRNA + NADPH + H(+). It carries out the reaction 5,6-dihydrouridine(20) in tRNA + NAD(+) = uridine(20) in tRNA + NADH + H(+). The catalysed reaction is 5,6-dihydrouridine(20a) in tRNA + NADP(+) = uridine(20a) in tRNA + NADPH + H(+). It catalyses the reaction 5,6-dihydrouridine(20a) in tRNA + NAD(+) = uridine(20a) in tRNA + NADH + H(+). Functionally, catalyzes the synthesis of 5,6-dihydrouridine (D), a modified base found in the D-loop of most tRNAs, via the reduction of the C5-C6 double bond in target uridines. Specifically modifies U20 and U20a in tRNAs. In Xylella fastidiosa (strain Temecula1 / ATCC 700964), this protein is tRNA-dihydrouridine(20/20a) synthase.